Consider the following 39-residue polypeptide: Omega-theraphotoxin-Ba1a (39 aa).

Cystine bridges form between Cys-4–Cys-25, Cys-8–Cys-31, and Cys-17–Cys-36.

It belongs to the neurotoxin 12 (Hwtx-2) family. 06 (TXP1) subfamily. As to expression, expressed by the venom gland.

It is found in the secreted. Inhibits voltage-gated calcium channels (Cav) in rat cerebellar granule cells. Has insecticidal activity to crickets (Acheta domesticus). Is not toxic to mice. This Brachypelma albiceps (Mexican golden redrump tarantula) protein is Omega-theraphotoxin-Ba1a.